We begin with the raw amino-acid sequence, 420 residues long: 20-oxo-5-O-mycaminosyltylactone 23-monooxygenase (420 aa).

The tract at residues 1-28 (MSSSGDARPSQKGILLPAARANDTDEAA) is disordered. Positions 118, 122, 311, 367, and 369 each coordinate heme.

Belongs to the cytochrome P450 family.

The catalysed reaction is 20-oxo-5-O-beta-D-mycaminosyltylonolide + 2 reduced [2Fe-2S]-[ferredoxin] + O2 + 2 H(+) = 5-O-beta-D-mycaminosyltylonolide + 2 oxidized [2Fe-2S]-[ferredoxin] + H2O. The protein operates within antibiotic biosynthesis; tylosin biosynthesis. In terms of biological role, involved in the biosynthesis of the complex macrolide antibiotic tylosin. Catalyzes the hydroxylation of 20-oxo-5-O-beta-mycaminosyltylactone at the C-23 position to yield 5-O-beta-mycaminosyltylonolide. The polypeptide is 20-oxo-5-O-mycaminosyltylactone 23-monooxygenase (Streptomyces fradiae (Streptomyces roseoflavus)).